The chain runs to 339 residues: WAT1-related protein At5g40210 (339 aa).

10 helical membrane passes run 11–31 (GWIL…NTLV), 42–62 (FVVL…LTFF), 74–94 (FSIL…QILG), 104–124 (TLSS…AVVF), 140–160 (VLGT…HGPM), 168–188 (WIIG…SYLV), 200–220 (VVVT…VSLL), 233–253 (FDIT…YYVI), 266–286 (LSMF…IFLG), and 289–309 (LYLG…MVLW). The region spanning 29–154 (TLVKAATSKG…LSIIGALVVT (126 aa)) is the EamA domain.

Belongs to the drug/metabolite transporter (DMT) superfamily. Plant drug/metabolite exporter (P-DME) (TC 2.A.7.4) family.

The protein resides in the membrane. This Arabidopsis thaliana (Mouse-ear cress) protein is WAT1-related protein At5g40210.